Here is a 308-residue protein sequence, read N- to C-terminus: Aspartate carbamoyltransferase catalytic subunit (308 aa).

Carbamoyl phosphate is bound by residues Arg59 and Thr60. Residue Lys87 participates in L-aspartate binding. Residues Arg109, His139, and Gln142 each contribute to the carbamoyl phosphate site. 2 residues coordinate L-aspartate: Arg172 and Arg224. The carbamoyl phosphate site is built by Ala265 and Pro266.

This sequence belongs to the aspartate/ornithine carbamoyltransferase superfamily. ATCase family. Heterododecamer (2C3:3R2) of six catalytic PyrB chains organized as two trimers (C3), and six regulatory PyrI chains organized as three dimers (R2).

It catalyses the reaction carbamoyl phosphate + L-aspartate = N-carbamoyl-L-aspartate + phosphate + H(+). It functions in the pathway pyrimidine metabolism; UMP biosynthesis via de novo pathway; (S)-dihydroorotate from bicarbonate: step 2/3. Its function is as follows. Catalyzes the condensation of carbamoyl phosphate and aspartate to form carbamoyl aspartate and inorganic phosphate, the committed step in the de novo pyrimidine nucleotide biosynthesis pathway. The polypeptide is Aspartate carbamoyltransferase catalytic subunit (Enterococcus faecalis (strain ATCC 700802 / V583)).